A 710-amino-acid polypeptide reads, in one-letter code: Ephexin-1 (710 aa).

The span at M1–S20 shows a compositional bias: basic and acidic residues. The tract at residues M1–D146 is disordered. Residues M1–I272 form a regulatory region; modulates activity toward RHOA, RAC1 and CDC42 region. Residues Q123–T137 show a composition bias toward polar residues. The residue at position 177 (Y177) is a Phosphotyrosine. The interval R192–R234 is disordered. Over residues D211–L227 the composition is skewed to acidic residues. One can recognise a DH domain in the interval R273 to G457. Residues W489–R601 form the PH domain. The SH3 domain maps to L612 to N673. Residues H688–K699 show a composition bias toward basic and acidic residues. Residues H688 to Q710 are disordered. The span at D700–Q710 shows a compositional bias: basic residues.

As to quaternary structure, interacts with CDK5R1 and EPHA4; activated by EPHA4 through the CDK5 kinase. In terms of processing, src-dependent phosphorylation at Tyr-177 upon EPHA4 activation increases the guanine exchange factor activity toward RHOA. Phosphorylation by CDK5 upon EPHA4 activation by EFNA1 may regulate dendritic spine morphogenesis. In terms of tissue distribution, highly expressed in brain and to a lower extent in eye.

It is found in the cytoplasm. Its subcellular location is the membrane. It localises to the cell projection. The protein localises to the growth cone. In terms of biological role, acts as a guanine nucleotide exchange factor (GEF) which differentially activates the GTPases RHOA, RAC1 and CDC42. Plays a role in axon guidance regulating ephrin-induced growth cone collapse and dendritic spine morphogenesis. Upon activation by ephrin through EPHA4, the GEF activity switches toward RHOA resulting in its activation. Activated RHOA promotes cone retraction at the expense of RAC1- and CDC42-stimulated growth cone extension. The protein is Ephexin-1 (Ngef) of Mus musculus (Mouse).